A 223-amino-acid chain; its full sequence is Sigma non-opioid intracellular receptor 1 (223 aa).

The Lumenal segment spans residues 1-9; that stretch reads MCWAVGRRW. The interval 2-8 is targeting to endoplasmic reticulum-associated lipid droplets; sequence CWAVGRR. Residues 10–30 traverse the membrane as a helical segment; that stretch reads AWAALLLAVAAVLAQVVWLWL. Topologically, residues 31–223 are cytoplasmic; that stretch reads GTQSFVFQHE…LTTYLFGQDA (193 aa). The important for ligand-binding stretch occupies residues 99–106; it reads SLSEYVLL. A C-terminal hydrophobic region region spans residues 177 to 223; the sequence is VIPSTLGFALADTVFSTQDFLTLFYTLRAYARGLRLELTTYLFGQDA.

Belongs to the ERG2 family. As to quaternary structure, homotrimer. Forms a ternary complex with ANK2 and ITPR3. The complex is disrupted by agonists. Interacts with KCNA4. Interacts with KCNA2; cocaine consumption leads to increased interaction. Interacts with RNF112 in an oxidative stress-regulated manner.

The protein localises to the nucleus inner membrane. It localises to the nucleus outer membrane. Its subcellular location is the nucleus envelope. It is found in the cytoplasmic vesicle. The protein resides in the endoplasmic reticulum membrane. The protein localises to the membrane. It localises to the lipid droplet. Its subcellular location is the cell junction. It is found in the cell membrane. The protein resides in the cell projection. The protein localises to the growth cone. It localises to the postsynaptic density membrane. Its function is as follows. Functions in lipid transport from the endoplasmic reticulum and is involved in a wide array of cellular functions probably through regulation of the biogenesis of lipid microdomains at the plasma membrane. Involved in the regulation of different receptors it plays a role in BDNF signaling and EGF signaling. Also regulates ion channels like the potassium channel and could modulate neurotransmitter release. Plays a role in calcium signaling through modulation together with ANK2 of the ITP3R-dependent calcium efflux at the endoplasmic reticulum. Plays a role in several other cell functions including proliferation, survival and death. Originally identified for its ability to bind various psychoactive drugs it is involved in learning processes, memory and mood alteration. Necessary for proper mitochondrial axonal transport in motor neurons, in particular the retrograde movement of mitochondria. Plays a role in protecting cells against oxidative stress-induced cell death via its interaction with RNF112. In Bos taurus (Bovine), this protein is Sigma non-opioid intracellular receptor 1 (SIGMAR1).